The sequence spans 204 residues: NADH-ubiquinone oxidoreductase chain 6 (204 aa).

Transmembrane regions (helical) follow at residues 5–25, 29–49, 56–76, 91–111, and 151–171; these read IFLFYLFSIFALISSLMVIGL, VHSVLFLILVFCNVAGLLLLL, FMLIIVYVGAIAVLFLFVVMM, LWPIGILTFVILLSQFFSSFY, and LLFLICGLILLVAMIGVIVLT.

The protein belongs to the complex I subunit 6 family.

It is found in the mitochondrion membrane. It carries out the reaction a ubiquinone + NADH + 5 H(+)(in) = a ubiquinol + NAD(+) + 4 H(+)(out). In terms of biological role, core subunit of the mitochondrial membrane respiratory chain NADH dehydrogenase (Complex I) that is believed to belong to the minimal assembly required for catalysis. Complex I functions in the transfer of electrons from NADH to the respiratory chain. The immediate electron acceptor for the enzyme is believed to be ubiquinone. This is NADH-ubiquinone oxidoreductase chain 6 (ND6) from Chondrus crispus (Carrageen Irish moss).